The chain runs to 399 residues: All trans-polyprenyl-diphosphate synthase PDSS2 (399 aa).

Belongs to the FPP/GGPP synthase family. Heterotetramer composed of 2 PDSS1/DPS1 and 2 PDSS2/DLP1 subunits.

The protein localises to the mitochondrion. It catalyses the reaction 7 isopentenyl diphosphate + (2E,6E)-farnesyl diphosphate = all-trans-decaprenyl diphosphate + 7 diphosphate. The catalysed reaction is 6 isopentenyl diphosphate + (2E,6E)-farnesyl diphosphate = all-trans-nonaprenyl diphosphate + 6 diphosphate. It participates in cofactor biosynthesis; ubiquinone biosynthesis. In terms of biological role, heterotetrameric enzyme that catalyzes the condensation of farnesyl diphosphate (FPP), which acts as a primer, and isopentenyl diphosphate (IPP) to produce prenyl diphosphates of varying chain lengths and participates in the determination of the side chain of ubiquinone. Supplies nona and decaprenyl diphosphate, the precursors for the side chain of the isoprenoid quinones ubiquinone-9 (Q9) and ubiquinone-10 (Q10) respectively. The enzyme adds isopentenyl diphosphate molecules sequentially to farnesyl diphosphate with trans stereochemistry. May play a role during cerebellar development. May regulate mitochondrial respiratory chain function. The protein is All trans-polyprenyl-diphosphate synthase PDSS2 of Homo sapiens (Human).